The chain runs to 198 residues: Probable nicotinate-nucleotide adenylyltransferase (198 aa).

It belongs to the NadD family.

It catalyses the reaction nicotinate beta-D-ribonucleotide + ATP + H(+) = deamido-NAD(+) + diphosphate. It participates in cofactor biosynthesis; NAD(+) biosynthesis; deamido-NAD(+) from nicotinate D-ribonucleotide: step 1/1. Functionally, catalyzes the reversible adenylation of nicotinate mononucleotide (NaMN) to nicotinic acid adenine dinucleotide (NaAD). This chain is Probable nicotinate-nucleotide adenylyltransferase, found in Chlorobium phaeobacteroides (strain BS1).